The primary structure comprises 146 residues: Large ribosomal subunit protein uL11 (146 aa).

It belongs to the universal ribosomal protein uL11 family. In terms of assembly, part of the ribosomal stalk of the 50S ribosomal subunit. Interacts with L10 and the large rRNA to form the base of the stalk. L10 forms an elongated spine to which L12 dimers bind in a sequential fashion forming a multimeric L10(L12)X complex. Post-translationally, one or more lysine residues are methylated.

In terms of biological role, forms part of the ribosomal stalk which helps the ribosome interact with GTP-bound translation factors. The protein is Large ribosomal subunit protein uL11 of Treponema pallidum subsp. pallidum (strain SS14).